We begin with the raw amino-acid sequence, 79 residues long: Exodeoxyribonuclease 7 small subunit (79 aa).

It belongs to the XseB family. In terms of assembly, heterooligomer composed of large and small subunits.

Its subcellular location is the cytoplasm. It carries out the reaction Exonucleolytic cleavage in either 5'- to 3'- or 3'- to 5'-direction to yield nucleoside 5'-phosphates.. Its function is as follows. Bidirectionally degrades single-stranded DNA into large acid-insoluble oligonucleotides, which are then degraded further into small acid-soluble oligonucleotides. The sequence is that of Exodeoxyribonuclease 7 small subunit from Haemophilus influenzae (strain PittGG).